Here is a 195-residue protein sequence, read N- to C-terminus: Molybdenum cofactor guanylyltransferase (195 aa).

GTP contacts are provided by residues 10–12 (LAG), Lys-23, Asn-51, Asp-69, and Asp-99. Asp-99 contributes to the Mg(2+) binding site.

It belongs to the MobA family. Monomer. Requires Mg(2+) as cofactor.

Its subcellular location is the cytoplasm. The catalysed reaction is Mo-molybdopterin + GTP + H(+) = Mo-molybdopterin guanine dinucleotide + diphosphate. Transfers a GMP moiety from GTP to Mo-molybdopterin (Mo-MPT) cofactor (Moco or molybdenum cofactor) to form Mo-molybdopterin guanine dinucleotide (Mo-MGD) cofactor. The polypeptide is Molybdenum cofactor guanylyltransferase (Shewanella putrefaciens (strain CN-32 / ATCC BAA-453)).